A 156-amino-acid chain; its full sequence is Small ribosomal subunit protein uS7 (156 aa).

This sequence belongs to the universal ribosomal protein uS7 family. In terms of assembly, part of the 30S ribosomal subunit. Contacts proteins S9 and S11.

One of the primary rRNA binding proteins, it binds directly to 16S rRNA where it nucleates assembly of the head domain of the 30S subunit. Is located at the subunit interface close to the decoding center, probably blocks exit of the E-site tRNA. This Erythrobacter litoralis (strain HTCC2594) protein is Small ribosomal subunit protein uS7.